Here is a 142-residue protein sequence, read N- to C-terminus: UPF0102 protein Bcep18194_A3391 (142 aa).

Positions 1–27 (MCHAAPARPGDGRGLPRAGDNFSGAAR) are disordered.

It belongs to the UPF0102 family.

This chain is UPF0102 protein Bcep18194_A3391, found in Burkholderia lata (strain ATCC 17760 / DSM 23089 / LMG 22485 / NCIMB 9086 / R18194 / 383).